The primary structure comprises 324 residues: Putative GTPase PYRAB02490 (324 aa).

GTP is bound by residues 52-60 (GPPGAGKST), Asp-194, and 229-231 (VAT).

Belongs to the SIMIBI class G3E GTPase family. ArgK/MeaB subfamily.

In terms of biological role, may have GTPase activity. May also bind and hydrolyze ATP. May function as chaperone. The sequence is that of Putative GTPase PYRAB02490 from Pyrococcus abyssi (strain GE5 / Orsay).